We begin with the raw amino-acid sequence, 260 residues long: MGGSESTGRKVSFGMDEEERVRVLRGVRLSDEVVNRMKDSNLPSKDQSTSTASGTTSGPTTFPSKAGPSASHSASTSKDGAHKPTARGVGHQYAEEDLYRRYEKEQALIQEELARLAKREREAAHERLSSSVLREKNITSQERRKAEHLPADLDEWAKELEQKEAELQRLNTFYREQLNSIEKKNLEIYKLTAEQFHTAASNAELRVKQRSYDPVCMDLQSNILKCYAENKQERLNCSDLAKEYGKCVSAAQKNLLFNHG.

The disordered stretch occupies residues 1-92 (MGGSESTGRK…KPTARGVGHQ (92 aa)). Residue Gly2 is the site of N-myristoyl glycine attachment. The span at 28–39 (RLSDEVVNRMKD) shows a compositional bias: basic and acidic residues. Positions 48-64 (STSTASGTTSGPTTFPS) are enriched in low complexity. Residues 94 to 187 (AEEDLYRRYE…LNSIEKKNLE (94 aa)) adopt a coiled-coil conformation. The 43-residue stretch at 213–255 (DPVCMDLQSNILKCYAENKQERLNCSDLAKEYGKCVSAAQKNL) folds into the CHCH domain. Short sequence motifs (cx9C motif) lie at residues 216 to 226 (CMDLQSNILKC) and 237 to 247 (CSDLAKEYGKC). Disulfide bonds link Cys216–Cys247 and Cys226–Cys237.

Belongs to the MICOS complex subunit Mic19 family. Metazoan Mic25 subfamily. As to quaternary structure, component of the mitochondrial contact site and cristae organizing system (MICOS) complex (also known as MINOS or MitOS complex).

Its subcellular location is the mitochondrion inner membrane. In terms of biological role, component of the MICOS complex, a large protein complex of the mitochondrial inner membrane that plays crucial roles in the maintenance of crista junctions, inner membrane architecture, and formation of contact sites to the outer membrane. This is MICOS complex subunit mic25-a (chchd6-a) from Xenopus laevis (African clawed frog).